We begin with the raw amino-acid sequence, 474 residues long: 6-phospho-beta-glucosidase AscB (474 aa).

Glutamate 180 functions as the Proton donor in the catalytic mechanism. The Nucleophile role is filled by glutamate 372.

It belongs to the glycosyl hydrolase 1 family.

The catalysed reaction is 6-phospho-beta-D-glucosyl-(1-&gt;4)-D-glucose + H2O = D-glucose 6-phosphate + D-glucose. Functionally, can hydrolyze salicin, cellobiose, and probably arbutin. The chain is 6-phospho-beta-glucosidase AscB (ascB) from Escherichia coli (strain K12).